We begin with the raw amino-acid sequence, 401 residues long: Imidazolonepropionase (401 aa).

The Fe(3+) site is built by His66 and His68. Zn(2+)-binding residues include His66 and His68. 4-imidazolone-5-propanoate is bound by residues Arg75, Tyr138, and His171. An N-formimidoyl-L-glutamate-binding site is contributed by Tyr138. Fe(3+) is bound at residue His236. His236 lines the Zn(2+) pocket. 4-imidazolone-5-propanoate is bound at residue Gln239. Residue Asp311 coordinates Fe(3+). A Zn(2+)-binding site is contributed by Asp311. N-formimidoyl-L-glutamate is bound by residues Asn313 and Gly315. Thr316 provides a ligand contact to 4-imidazolone-5-propanoate.

The protein belongs to the metallo-dependent hydrolases superfamily. HutI family. Zn(2+) serves as cofactor. Requires Fe(3+) as cofactor.

It localises to the cytoplasm. It carries out the reaction 4-imidazolone-5-propanoate + H2O = N-formimidoyl-L-glutamate. It participates in amino-acid degradation; L-histidine degradation into L-glutamate; N-formimidoyl-L-glutamate from L-histidine: step 3/3. Functionally, catalyzes the hydrolytic cleavage of the carbon-nitrogen bond in imidazolone-5-propanoate to yield N-formimidoyl-L-glutamate. It is the third step in the universal histidine degradation pathway. This is Imidazolonepropionase from Pseudomonas syringae pv. tomato (strain ATCC BAA-871 / DC3000).